Here is a 363-residue protein sequence, read N- to C-terminus: Ethanolamine kinase 1 (363 aa).

It belongs to the choline/ethanolamine kinase family.

The protein resides in the cytoplasm. It carries out the reaction ethanolamine + ATP = phosphoethanolamine + ADP + H(+). Its pathway is phospholipid metabolism; phosphatidylethanolamine biosynthesis; phosphatidylethanolamine from ethanolamine: step 1/3. Functionally, highly specific for ethanolamine phosphorylation. May be a rate-controlling step in phosphatidylethanolamine biosynthesis. The protein is Ethanolamine kinase 1 (Etnk1) of Mus musculus (Mouse).